Consider the following 378-residue polypeptide: tRNA-specific 2-thiouridylase MnmA (378 aa).

Residues A6–S13 and L32 contribute to the ATP site. The Nucleophile role is filled by C101. C101 and C199 are oxidised to a cystine. Position 125 (G125) interacts with ATP. Positions K148–Q150 are interaction with tRNA. Residue C199 is the Cysteine persulfide intermediate of the active site.

The protein belongs to the MnmA/TRMU family.

Its subcellular location is the cytoplasm. It carries out the reaction S-sulfanyl-L-cysteinyl-[protein] + uridine(34) in tRNA + AH2 + ATP = 2-thiouridine(34) in tRNA + L-cysteinyl-[protein] + A + AMP + diphosphate + H(+). Functionally, catalyzes the 2-thiolation of uridine at the wobble position (U34) of tRNA, leading to the formation of s(2)U34. The sequence is that of tRNA-specific 2-thiouridylase MnmA from Renibacterium salmoninarum (strain ATCC 33209 / DSM 20767 / JCM 11484 / NBRC 15589 / NCIMB 2235).